Consider the following 1003-residue polypeptide: Glycine--tRNA ligase (1003 aa).

The glycine--tRNA ligase alpha subunit stretch occupies residues 1 to 310 (MSSQPLTLQT…VTPKKIPTIC (310 aa)). Positions 311–1003 (QPEDFLLEIG…CFGFYAWGVL (693 aa)) are glycine--tRNA ligase beta subunit.

Belongs to the class-II aminoacyl-tRNA synthetase family.

The protein localises to the cytoplasm. The enzyme catalyses tRNA(Gly) + glycine + ATP = glycyl-tRNA(Gly) + AMP + diphosphate. This is Glycine--tRNA ligase (glyQS) from Chlamydia trachomatis serovar D (strain ATCC VR-885 / DSM 19411 / UW-3/Cx).